The chain runs to 210 residues: Ribosomal RNA large subunit methyltransferase E (210 aa).

The S-adenosyl-L-methionine site is built by glycine 60, tryptophan 62, aspartate 80, aspartate 96, and aspartate 122. The Proton acceptor role is filled by lysine 162.

Belongs to the class I-like SAM-binding methyltransferase superfamily. RNA methyltransferase RlmE family.

The protein resides in the cytoplasm. The catalysed reaction is uridine(2552) in 23S rRNA + S-adenosyl-L-methionine = 2'-O-methyluridine(2552) in 23S rRNA + S-adenosyl-L-homocysteine + H(+). In terms of biological role, specifically methylates the uridine in position 2552 of 23S rRNA at the 2'-O position of the ribose in the fully assembled 50S ribosomal subunit. The sequence is that of Ribosomal RNA large subunit methyltransferase E from Dichelobacter nodosus (strain VCS1703A).